We begin with the raw amino-acid sequence, 160 residues long: SsrA-binding protein (160 aa).

Positions 132-160 (KEFDKRDTMRERDSNRELQRAVRNKGKEE) are disordered.

This sequence belongs to the SmpB family.

The protein localises to the cytoplasm. Its function is as follows. Required for rescue of stalled ribosomes mediated by trans-translation. Binds to transfer-messenger RNA (tmRNA), required for stable association of tmRNA with ribosomes. tmRNA and SmpB together mimic tRNA shape, replacing the anticodon stem-loop with SmpB. tmRNA is encoded by the ssrA gene; the 2 termini fold to resemble tRNA(Ala) and it encodes a 'tag peptide', a short internal open reading frame. During trans-translation Ala-aminoacylated tmRNA acts like a tRNA, entering the A-site of stalled ribosomes, displacing the stalled mRNA. The ribosome then switches to translate the ORF on the tmRNA; the nascent peptide is terminated with the 'tag peptide' encoded by the tmRNA and targeted for degradation. The ribosome is freed to recommence translation, which seems to be the essential function of trans-translation. This is SsrA-binding protein from Pseudomonas putida (strain ATCC 47054 / DSM 6125 / CFBP 8728 / NCIMB 11950 / KT2440).